We begin with the raw amino-acid sequence, 631 residues long: MSKSHAAYIDYALRRTTNMPVEMMGTDVVRLKDYQHFVARVFLGLDSMHSLLLFHETGVGKTMTTVYILKHLKDIYTNWAIILLVKKALIEDPWMNTILRYAPEITKDCIFINYDDQNFRNKFFTNIKTINSKSRICVIIDECHNFISKSLIKEDGKIRPTRSVYNFLSKTIALKNHKMICLSATPIVNSVQEFTMLVNLLRPGSLQHQSLFENKRLVDEKELVSKLGGLCSYIVNNEFSIFDDVEGSASFAKKTVLMRYVNMSKKQEEIYQKAKLAEIKTGISSFRILRRMATTFTFDSFPERQNRDPGEYAQEIATLYNDFKNSLRDREFSKSALDTFKKGELLKGDASAADISLFTELKEKSVKFIDVCLGILASHGKCLVFEPFVNQSGIEILLLYFKVFGISNIEFSSRTKDTRIKAVAEFNQESNTNGECIKTCVFSSSGGEGISFFSINDIFILDMTWNEASLRQIVGRAIRLNSHVLTPPERRYVNVHFIMARLSNGMPTVDEDLFEIIQSKSKEFVQLFRVFKHTSLEWIHANEKDFSPIDNESGWKTLVSRAIDLSSKKNITNKLIEGTNIWYSNSNRLMSINRGFKGVDGRVYDVDGNYLHDMPDNPVIKIHDGKLIYIF.

Residues 42–204 (FLGLDSMHSL…TMLVNLLRPG (163 aa)) form the Helicase ATP-binding domain. 55–62 (HETGVGKT) is a binding site for ATP. The DEXH box signature appears at 141-144 (DECH). The Helicase C-terminal domain occupies 367 to 532 (KFIDVCLGIL…EFVQLFRVFK (166 aa)).

It belongs to the helicase family. NPH I subfamily. In terms of assembly, monomer.

The enzyme catalyses a ribonucleoside 5'-triphosphate + H2O = a ribonucleoside 5'-diphosphate + phosphate + H(+). Its function is as follows. Serves two roles in transcription; it acts in concert with viral termination factor/capping enzyme to catalyze release of UUUUUNU-containing nascent RNA from the elongation complex, and it acts by itself as a polymerase elongation factor to facilitate readthrough of intrinsic pause sites. This chain is Nucleoside triphosphatase I (NPH1), found in Homo sapiens (Human).